The primary structure comprises 180 residues: Calcineurin subunit B type 1 (180 aa).

A lipid anchor (N-myristoyl glycine) is attached at G2. 4 consecutive EF-hand domains span residues 25–60 (AELK…ALNP), 62–92 (LERV…LSHK), 94–129 (TKED…MVGT), and 135–170 (QLQQ…QEGI). Ca(2+) contacts are provided by D38, D40, S42, T44, E49, D70, N72, D74, E76, E81, D107, D109, D111, and E118. The tract at residues 138-143 (QIVDKT) is canA/calcineurin A binding. Residues D148, D150, D152, K154, and E159 each coordinate Ca(2+).

The protein belongs to the calcineurin regulatory subunit family. Forms a complex composed of a calmodulin-dependent catalytic subunit canA (also known as calcineurin A) and a regulatory Ca(2+)-binding subunit cnbA (also known as calcineurin B).

Its function is as follows. Regulatory subunit of calcineurin, a calcium-dependent, calmodulin stimulated protein phosphatase. Confers calcium sensitivity. Important for stalk formation. This Dictyostelium discoideum (Social amoeba) protein is Calcineurin subunit B type 1 (cnbA).